The primary structure comprises 237 residues: Demethylmenaquinone methyltransferase (237 aa).

Residues Thr62, Asp80, 102-103, and Ser119 each bind S-adenosyl-L-methionine; that span reads DA.

Belongs to the class I-like SAM-binding methyltransferase superfamily. MenG/UbiE family.

It carries out the reaction a 2-demethylmenaquinol + S-adenosyl-L-methionine = a menaquinol + S-adenosyl-L-homocysteine + H(+). It functions in the pathway quinol/quinone metabolism; menaquinone biosynthesis; menaquinol from 1,4-dihydroxy-2-naphthoate: step 2/2. Its function is as follows. Methyltransferase required for the conversion of demethylmenaquinol (DMKH2) to menaquinol (MKH2). The polypeptide is Demethylmenaquinone methyltransferase (Renibacterium salmoninarum (strain ATCC 33209 / DSM 20767 / JCM 11484 / NBRC 15589 / NCIMB 2235)).